A 98-amino-acid chain; its full sequence is Aspartyl/glutamyl-tRNA(Asn/Gln) amidotransferase subunit C (98 aa).

It belongs to the GatC family. As to quaternary structure, heterotrimer of A, B and C subunits.

It carries out the reaction L-glutamyl-tRNA(Gln) + L-glutamine + ATP + H2O = L-glutaminyl-tRNA(Gln) + L-glutamate + ADP + phosphate + H(+). The enzyme catalyses L-aspartyl-tRNA(Asn) + L-glutamine + ATP + H2O = L-asparaginyl-tRNA(Asn) + L-glutamate + ADP + phosphate + 2 H(+). In terms of biological role, allows the formation of correctly charged Asn-tRNA(Asn) or Gln-tRNA(Gln) through the transamidation of misacylated Asp-tRNA(Asn) or Glu-tRNA(Gln) in organisms which lack either or both of asparaginyl-tRNA or glutaminyl-tRNA synthetases. The reaction takes place in the presence of glutamine and ATP through an activated phospho-Asp-tRNA(Asn) or phospho-Glu-tRNA(Gln). The chain is Aspartyl/glutamyl-tRNA(Asn/Gln) amidotransferase subunit C from Bifidobacterium adolescentis (strain ATCC 15703 / DSM 20083 / NCTC 11814 / E194a).